A 509-amino-acid chain; its full sequence is Coiled-coil domain-containing protein 181 (509 aa).

Over residues 46 to 82 (ENINQDLKENETVMEHTKRHSDPDKSLQDEVSPRRND) the composition is skewed to basic and acidic residues. Disordered stretches follow at residues 46–120 (ENIN…EEED) and 241–367 (PINN…EEKE). 2 stretches are compositionally biased toward polar residues: residues 243 to 266 (NNANSTENDPQQLLPRSSNSSVSG) and 300 to 334 (TCPSSAVNSDRSKGNGKSNHRTQSAHISPVTSTYC). Positions 335-375 (LSPRQKELQKQLEEKREKLKREEERRKIEEEKEKKRENDIV) form a coiled coil. Residues 338 to 367 (RQKELQKQLEEKREKLKREEERRKIEEEKE) are compositionally biased toward basic and acidic residues.

The protein belongs to the CCDC181 family. Homodimer. Interacts with HOOK1. Interacts with HOOK2. Interacts with HOOK3.

It is found in the cytoplasm. Its subcellular location is the cytoskeleton. It localises to the cell projection. The protein localises to the cilium. The protein resides in the flagellum. In terms of biological role, microtubule-binding protein that localizes to the microtubular manchette of elongating spermatids. This is Coiled-coil domain-containing protein 181 from Homo sapiens (Human).